Reading from the N-terminus, the 335-residue chain is DNA-directed RNA polymerase subunit alpha (335 aa).

The segment at 1-233 is alpha N-terminal domain (alpha-NTD); sequence MVREKIRVST…DLLIPFLHAE (233 aa). The interval 263–335 is alpha C-terminal domain (alpha-CTD); that stretch reads KKKIALKFIF…HFVIDLKNKR (73 aa).

The protein belongs to the RNA polymerase alpha chain family. In terms of assembly, in plastids the minimal PEP RNA polymerase catalytic core is composed of four subunits: alpha, beta, beta', and beta''. When a (nuclear-encoded) sigma factor is associated with the core the holoenzyme is formed, which can initiate transcription.

Its subcellular location is the plastid. The protein resides in the chloroplast. It carries out the reaction RNA(n) + a ribonucleoside 5'-triphosphate = RNA(n+1) + diphosphate. Its function is as follows. DNA-dependent RNA polymerase catalyzes the transcription of DNA into RNA using the four ribonucleoside triphosphates as substrates. The chain is DNA-directed RNA polymerase subunit alpha from Spinacia oleracea (Spinach).